The chain runs to 329 residues: Olfactory receptor 5AL1 (329 aa).

Topologically, residues 1-44 (MCALKGFLEENFYTYSVAKGNHSTVYEFILLGLTDNAELQVTLF) are extracellular. Asn21 carries an N-linked (GlcNAc...) asparagine glycan. Residues 45-65 (GIFLVVYLASFMGNFGLIMLI) form a helical membrane-spanning segment. Residues 66–73 (QISPQLHT) are Cytoplasmic-facing. The chain crosses the membrane as a helical span at residues 74-94 (PMYFFLSHLAFVDFSFTSSVA). At 95-113 (PNTLVNFLCEVKSITFYAC) the chain is on the extracellular side. A disulfide bridge links Cys113 with Cys205. A helical transmembrane segment spans residues 114 to 134 (AIQVCCFITFVVCELYLLSIM). Residues 135–157 (AYDRYVAICNPLLYVILIPRKLC) are Cytoplasmic-facing. The chain crosses the membrane as a helical span at residues 158-178 (IKLIASTYVYGFTVGLVQTVA). Residues 179 to 220 (TSYLSFCDSNVINHFYHDDVPLVALACSDTHVKELMLLIIAG) lie on the Extracellular side of the membrane. A helical transmembrane segment spans residues 221 to 241 (FNTLCSLVIVLISYGFIFFAI). At 242–253 (LRIHSAEGRQKA) the chain is on the cytoplasmic side. A helical transmembrane segment spans residues 254-274 (FSTSASHLTSITIFYGTIIFM). The Extracellular segment spans residues 275 to 287 (YPQPKSSHSLNMD). The chain crosses the membrane as a helical span at residues 288 to 308 (KVASVFNVVVIPTLNPLIYSL). Topologically, residues 309–329 (RNQEVKNALKRIIEKLCLAVK) are cytoplasmic.

The protein belongs to the G-protein coupled receptor 1 family.

The protein localises to the cell membrane. Functionally, odorant receptor. This is Olfactory receptor 5AL1 (OR5AL1) from Homo sapiens (Human).